The chain runs to 512 residues: Alpha-1B-glycoprotein (512 aa).

Residues 1–18 (MSLLATVLLLWGFTLGPG) form the signal peptide. 5 consecutive Ig-like V-type domains span residues 22 to 126 (MLDS…VTGK), 127 to 219 (EPLP…MYAS), 220 to 312 (QAPP…PVEL), 313 to 415 (MWSD…LRVN), and 416 to 512 (GPPP…IVEG). 3 N-linked (GlcNAc...) asparagine glycosylation sites follow: asparagine 44, asparagine 89, and asparagine 192. 5 disulfides stabilise this stretch: cysteine 49–cysteine 96, cysteine 153–cysteine 195, cysteine 245–cysteine 292, cysteine 343–cysteine 392, and cysteine 441–cysteine 488. N-linked (GlcNAc...) asparagine glycosylation is found at asparagine 369, asparagine 381, asparagine 389, and asparagine 485.

Interacts with CRISP3. As to expression, expressed in the liver hepatocytes of male and female GH transgenic mice and in the liver of female, but not of male, non-transgenic mice.

The protein localises to the secreted. The chain is Alpha-1B-glycoprotein (A1bg) from Mus musculus (Mouse).